The following is a 342-amino-acid chain: Platelet-activating factor receptor (342 aa).

Over 1–16 (MEPHDSSHMDSEFRYT) the chain is Extracellular. Residues 17 to 38 (LFPIVYSIIFVLGVIANGYVLW) form a helical membrane-spanning segment. The Cytoplasmic segment spans residues 39 to 54 (VFARLYPCKKFNEIKI). A helical membrane pass occupies residues 55 to 74 (FMVNLTMADMLFLITLPLWI). Topologically, residues 75-91 (VYYQNQGNWILPKFLCN) are extracellular. A disulfide bond links C90 and C173. Residues 92–113 (VAGCLFFINTYCSVAFLGVITY) traverse the membrane as a helical segment. Residues 114–133 (NRFQAVTRPIKTAQANTRKR) are Cytoplasmic-facing. The chain crosses the membrane as a helical span at residues 134 to 155 (GISLSLVIWVAIVGAASYFLIL). The Extracellular segment spans residues 156 to 184 (DSTNTVPDSAGSGNVTRCFEHYEKGSVPV). An N-linked (GlcNAc...) asparagine glycan is attached at N169. The helical transmembrane segment at 185–205 (LIIHIFIVFSFFLVFLIILFC) threads the bilayer. At 206-233 (NLVIIRTLLMQPVQQQRNAEVKRRALWM) the chain is on the cytoplasmic side. Residues 234–254 (VCTVLAVFIICFVPHHVVQLP) form a helical membrane-spanning segment. Topologically, residues 255-276 (WTLAELGFQDSKFHQAINDAHQ) are extracellular. A helical membrane pass occupies residues 277 to 296 (VTLCLLSTNCVLDPVIYCFL). The Cytoplasmic segment spans residues 297–342 (TKKFRKHLTEKFYSMRSSRKCSRATTDTVTEVVVPFNQIPGNSLKN).

The protein belongs to the G-protein coupled receptor 1 family. In terms of assembly, interacts with ARRB1. As to expression, expressed in the placenta, lung, left and right heart ventricles, heart atrium, leukocytes and differentiated HL-60 granulocytes.

The protein localises to the cell membrane. In terms of biological role, receptor for platelet activating factor, a chemotactic phospholipid mediator that possesses potent inflammatory, smooth-muscle contractile and hypotensive activity. Seems to mediate its action via a G protein that activates a phosphatidylinositol-calcium second messenger system. The sequence is that of Platelet-activating factor receptor (PTAFR) from Homo sapiens (Human).